A 96-amino-acid polypeptide reads, in one-letter code: Co-chaperonin GroES (96 aa).

Belongs to the GroES chaperonin family. As to quaternary structure, heptamer of 7 subunits arranged in a ring. Interacts with the chaperonin GroEL.

Its subcellular location is the cytoplasm. Its function is as follows. Together with the chaperonin GroEL, plays an essential role in assisting protein folding. The GroEL-GroES system forms a nano-cage that allows encapsulation of the non-native substrate proteins and provides a physical environment optimized to promote and accelerate protein folding. GroES binds to the apical surface of the GroEL ring, thereby capping the opening of the GroEL channel. This chain is Co-chaperonin GroES, found in Wolbachia sp. subsp. Brugia malayi (strain TRS).